A 120-amino-acid chain; its full sequence is Large ribosomal subunit protein eL18 (120 aa).

It belongs to the eukaryotic ribosomal protein eL18 family.

The polypeptide is Large ribosomal subunit protein eL18 (Thermococcus onnurineus (strain NA1)).